The following is a 611-amino-acid chain: U-box domain-containing protein 12 (611 aa).

The 75-residue stretch at 227–301 (IIPDEFRCPI…SQWCEANGIE (75 aa)) folds into the U-box domain. ARM repeat units lie at residues 355 to 394 (VNNRICIAEAGAIPLLVNLLSSSDPRTQEHAVTALLNLSI), 396 to 435 (ENNKASIVDSHAIPKIVEVLKTGSMETRENAAATLFSLSV), 437 to 476 (DENKVTIGAAGAIPPLINLLCDGSPRGKKDAATAIFNLCI), and 478 to 517 (QGNKVRAVKAGIVIHLMNFLVDPTGGMIDEALSLLSILAG).

It carries out the reaction S-ubiquitinyl-[E2 ubiquitin-conjugating enzyme]-L-cysteine + [acceptor protein]-L-lysine = [E2 ubiquitin-conjugating enzyme]-L-cysteine + N(6)-ubiquitinyl-[acceptor protein]-L-lysine.. Its pathway is protein modification; protein ubiquitination. Functionally, possesses E3 ubiquitin-protein ligase in vitro. In Oryza sativa subsp. japonica (Rice), this protein is U-box domain-containing protein 12 (PUB12).